A 139-amino-acid polypeptide reads, in one-letter code: Putative pre-16S rRNA nuclease (139 aa).

Belongs to the YqgF nuclease family.

The protein localises to the cytoplasm. In terms of biological role, could be a nuclease involved in processing of the 5'-end of pre-16S rRNA. This is Putative pre-16S rRNA nuclease from Legionella pneumophila (strain Lens).